Here is a 306-residue protein sequence, read N- to C-terminus: Glutathione transport system permease protein GsiC (306 aa).

Residues 1 to 8 (MLNYVIKR) lie on the Cytoplasmic side of the membrane. The helical transmembrane segment at 9–29 (LLGLIPTLFIVSVLVFLFVHM) threads the bilayer. Over 30 to 102 (LPGDPARLIA…SRFMPTLWLT (73 aa)) the chain is Periplasmic. Residues 95 to 292 (FMPTLWLTIT…LEFILINLVV (198 aa)) form the ABC transmembrane type-1 domain. The helical transmembrane segment at 103 to 123 (ITSMVWAVIFGMAAGIIAAVW) threads the bilayer. The Cytoplasmic portion of the chain corresponds to 124-134 (RNRWPDRLSMT). The chain crosses the membrane as a helical span at residues 135 to 155 (IAVSGISFPAFALGMLLIQVF). Over 156-168 (SVELGWLPTVGAD) the chain is Periplasmic. The chain crosses the membrane as a helical span at residues 169–189 (SWQHYILPSLTLGAAVAAVMA). Residues 190-228 (RFTRASFVDVLSEDYMRTARAKGVSETWVVLKHGLRNAM) are Cytoplasmic-facing. Residues 229–249 (IPVVTMMGLQFGFLLGGSIVV) form a helical membrane-spanning segment. Topologically, residues 250 to 277 (EKVFNWPGLGRLLVDSVEMRDYPVIQAE) are periplasmic. The chain crosses the membrane as a helical span at residues 278–298 (ILLFSLEFILINLVVDVLYAA). Residues 299-306 (INPAIRYK) lie on the Cytoplasmic side of the membrane.

This sequence belongs to the binding-protein-dependent transport system permease family. In terms of assembly, the complex is composed of two ATP-binding proteins (GsiA), two transmembrane proteins (GsiC and GsiD) and a solute-binding protein (GsiB).

The protein resides in the cell inner membrane. Functionally, part of the ABC transporter complex GsiABCD involved in glutathione import. Probably responsible for the translocation of the substrate across the membrane. The polypeptide is Glutathione transport system permease protein GsiC (Escherichia coli O1:K1 / APEC).